Reading from the N-terminus, the 400-residue chain is Dual specificity mitogen-activated protein kinase kinase 2 (400 aa).

Position 1 is an N-acetylmethionine (Met1). Residue Ser23 is modified to Phosphoserine. One can recognise a Protein kinase domain in the interval 72 to 369 (FERISELGAG…LKLLTNHAFI (298 aa)). ATP is bound by residues 78-86 (LGAGNGGVV) and Lys101. Catalysis depends on Asp194, which acts as the Proton acceptor. A phosphoserine; by RAF mark is found at Ser222 and Ser226. A disordered region spans residues 282 to 310 (PVVDGADGEPHSVSPRPRPPGRPISGHGM). Phosphoserine occurs at positions 293, 295, and 306. 2 positions are modified to phosphothreonine: Thr394 and Thr396.

This sequence belongs to the protein kinase superfamily. STE Ser/Thr protein kinase family. MAP kinase kinase subfamily. In terms of assembly, interacts with MORG1. Interacts with SGK1. Interacts with KSR1. Interacts with KSR1 and BRAF; the interaction with KSR1 mediates KSR1-BRAF dimerization. Interacts with GLS. The cofactor is Mg(2+). Post-translationally, MAPKK is itself dependent on Ser/Thr phosphorylation for activity catalyzed by MAP kinase kinase kinases (RAF or MEKK1). Phosphorylated by MAP2K1/MEK1. Expressed abundantly in the adult brain and muscle.

The protein resides in the cytoplasm. It localises to the membrane. It catalyses the reaction L-seryl-[protein] + ATP = O-phospho-L-seryl-[protein] + ADP + H(+). The enzyme catalyses L-threonyl-[protein] + ATP = O-phospho-L-threonyl-[protein] + ADP + H(+). The catalysed reaction is L-tyrosyl-[protein] + ATP = O-phospho-L-tyrosyl-[protein] + ADP + H(+). Its function is as follows. Catalyzes the concomitant phosphorylation of a threonine and a tyrosine residue in a Thr-Glu-Tyr sequence located in MAP kinases. Activates the ERK1 and ERK2 MAP kinases. Activates BRAF in a KSR1 or KSR2-dependent manner; by binding to KSR1 or KSR2 releases the inhibitory intramolecular interaction between KSR1 or KSR2 protein kinase and N-terminal domains which promotes KSR1 or KSR2-BRAF dimerization and BRAF activation. In Rattus norvegicus (Rat), this protein is Dual specificity mitogen-activated protein kinase kinase 2 (Map2k2).